A 130-amino-acid polypeptide reads, in one-letter code: Large ribosomal subunit protein bL12 (130 aa).

Belongs to the bacterial ribosomal protein bL12 family. Homodimer. Part of the ribosomal stalk of the 50S ribosomal subunit. Forms a multimeric L10(L12)X complex, where L10 forms an elongated spine to which 2 to 4 L12 dimers bind in a sequential fashion. Binds GTP-bound translation factors.

In terms of biological role, forms part of the ribosomal stalk which helps the ribosome interact with GTP-bound translation factors. Is thus essential for accurate translation. The protein is Large ribosomal subunit protein bL12 of Synechococcus sp. (strain RCC307).